Here is a 376-residue protein sequence, read N- to C-terminus: Putative cytosolic 5'-nucleotidase 3 (376 aa).

Asp-119 acts as the Nucleophile in catalysis. Mg(2+) is bound by residues Asp-119 and Asp-121. Residue Asp-121 is the Proton donor of the active site. Residues Glu-168, Ser-189, 236-237, and Lys-286 contribute to the substrate site; that span reads SA. A Mg(2+)-binding site is contributed by Asp-312.

This sequence belongs to the pyrimidine 5'-nucleotidase family.

It localises to the cytoplasm. It carries out the reaction a ribonucleoside 5'-phosphate + H2O = a ribonucleoside + phosphate. This is Putative cytosolic 5'-nucleotidase 3 from Caenorhabditis elegans.